The primary structure comprises 336 residues: Adenylosuccinate synthetase (336 aa).

GTP-binding positions include Gly12–Lys18 and Gly42–Ser44. Residue Asp13 is the Proton acceptor of the active site. Positions 13 and 42 each coordinate Mg(2+). IMP contacts are provided by residues Asp13–Lys16, Asn40–His43, Thr127, Arg141, Gln179, Thr194, and Arg256. Catalysis depends on His43, which acts as the Proton donor. Residue Thr252–Arg258 coordinates substrate. GTP-binding positions include Arg258, Cys284–Asp286, and Ser324–Gly326.

It belongs to the adenylosuccinate synthetase family. Homodimer. Mg(2+) is required as a cofactor.

Its subcellular location is the cytoplasm. The enzyme catalyses IMP + L-aspartate + GTP = N(6)-(1,2-dicarboxyethyl)-AMP + GDP + phosphate + 2 H(+). The protein operates within purine metabolism; AMP biosynthesis via de novo pathway; AMP from IMP: step 1/2. Functionally, plays an important role in the de novo pathway of purine nucleotide biosynthesis. Catalyzes the first committed step in the biosynthesis of AMP from IMP. The polypeptide is Adenylosuccinate synthetase (Methanococcus aeolicus (strain ATCC BAA-1280 / DSM 17508 / OCM 812 / Nankai-3)).